The chain runs to 279 residues: ATP synthase gamma chain (279 aa).

Belongs to the ATPase gamma chain family. In terms of assembly, F-type ATPases have 2 components, CF(1) - the catalytic core - and CF(0) - the membrane proton channel. CF(1) has five subunits: alpha(3), beta(3), gamma(1), delta(1), epsilon(1). CF(0) has three main subunits: a, b and c.

Its subcellular location is the cell membrane. Produces ATP from ADP in the presence of a proton gradient across the membrane. The gamma chain is believed to be important in regulating ATPase activity and the flow of protons through the CF(0) complex. The chain is ATP synthase gamma chain from Mycoplasma pneumoniae (strain ATCC 29342 / M129 / Subtype 1) (Mycoplasmoides pneumoniae).